The chain runs to 1060 residues: Carbamoyl phosphate synthase large chain (1060 aa).

A carboxyphosphate synthetic domain region spans residues Met1–Glu401. Positions 129, 169, 175, 176, 208, 210, 215, 241, 242, 243, 284, and 298 each coordinate ATP. One can recognise an ATP-grasp 1 domain in the interval Lys133–Val327. Residues Gln284, Glu298, and Asn300 each contribute to the Mg(2+) site. Mn(2+) contacts are provided by Gln284, Glu298, and Asn300. The segment at Ile402–Ser546 is oligomerization domain. A carbamoyl phosphate synthetic domain region spans residues Leu547–Tyr929. Residues Glu671–Leu861 enclose the ATP-grasp 2 domain. Arg707, Ala746, Leu748, Glu752, Gly777, Val778, His779, Ser780, Gln820, and Glu832 together coordinate ATP. Mg(2+) contacts are provided by Gln820, Glu832, and Asn834. Residues Gln820, Glu832, and Asn834 each coordinate Mn(2+). The 131-residue stretch at Leu930 to Asp1060 folds into the MGS-like domain. Positions Leu930–Asp1060 are allosteric domain.

The protein belongs to the CarB family. As to quaternary structure, composed of two chains; the small (or glutamine) chain promotes the hydrolysis of glutamine to ammonia, which is used by the large (or ammonia) chain to synthesize carbamoyl phosphate. Tetramer of heterodimers (alpha,beta)4. The cofactor is Mg(2+). Mn(2+) serves as cofactor.

It catalyses the reaction hydrogencarbonate + L-glutamine + 2 ATP + H2O = carbamoyl phosphate + L-glutamate + 2 ADP + phosphate + 2 H(+). The enzyme catalyses hydrogencarbonate + NH4(+) + 2 ATP = carbamoyl phosphate + 2 ADP + phosphate + 2 H(+). It functions in the pathway amino-acid biosynthesis; L-arginine biosynthesis; carbamoyl phosphate from bicarbonate: step 1/1. The protein operates within pyrimidine metabolism; UMP biosynthesis via de novo pathway; (S)-dihydroorotate from bicarbonate: step 1/3. In terms of biological role, large subunit of the glutamine-dependent carbamoyl phosphate synthetase (CPSase). CPSase catalyzes the formation of carbamoyl phosphate from the ammonia moiety of glutamine, carbonate, and phosphate donated by ATP, constituting the first step of 2 biosynthetic pathways, one leading to arginine and/or urea and the other to pyrimidine nucleotides. The large subunit (synthetase) binds the substrates ammonia (free or transferred from glutamine from the small subunit), hydrogencarbonate and ATP and carries out an ATP-coupled ligase reaction, activating hydrogencarbonate by forming carboxy phosphate which reacts with ammonia to form carbamoyl phosphate. The sequence is that of Carbamoyl phosphate synthase large chain from Streptococcus agalactiae serotype V (strain ATCC BAA-611 / 2603 V/R).